Reading from the N-terminus, the 405-residue chain is Protochlorophyllide reductase A, chloroplastic (405 aa).

The transit peptide at 1-69 (MALQAASLVS…LRNNKAIIRA (69 aa)) directs the protein to the chloroplast.

It belongs to the short-chain dehydrogenases/reductases (SDR) family. POR subfamily. As to quaternary structure, forms large complexes including TOC33, pPORA and OEP161 during pPORA import into plastids at the plastid envelope membrane. Interacts with CPP1 during plastid import. In terms of tissue distribution, expressed in young seedlings. Not detected in leaves.

The protein resides in the plastid. It localises to the chloroplast. The enzyme catalyses chlorophyllide a + NADP(+) = protochlorophyllide a + NADPH + H(+). It participates in porphyrin-containing compound metabolism; chlorophyll biosynthesis. Its function is as follows. Phototransformation of protochlorophyllide (Pchlide) to chlorophyllide (Chlide). PORA may also function as a photoprotectant during the transitory stage from dark to light. Functions in skotomorphogenesis, photomorphogenesis and throughout the plant life under specific light conditions. The polypeptide is Protochlorophyllide reductase A, chloroplastic (PORA) (Arabidopsis thaliana (Mouse-ear cress)).